We begin with the raw amino-acid sequence, 364 residues long: DNA-(apurinic or apyrimidinic site) endonuclease (364 aa).

Basic and acidic residues-rich tracts occupy residues 1-12 (MKRFFKPIEKEN) and 23-39 (PEKR…EKNQ). The interval 1 to 42 (MKRFFKPIEKENSPAAKKPCLSPEKRDGDGDGVEEEKNQNEP) is disordered. E80 contributes to the Mg(2+) binding site. Y182 is a catalytic residue. 3 residues coordinate Mg(2+): D222, N224, and D342. D222 serves as the catalytic Proton donor/acceptor.

Belongs to the DNA repair enzymes AP/exoA family. As to quaternary structure, interacts with ROS1. ROS1 is required for APE1L to stably associate with the DNA substrate. It depends on Mg(2+) as a cofactor. As to expression, expressed in leaves, flower buds and developing siliques. Not detected in roots.

The protein resides in the nucleus. It localises to the nucleolus. Functionally, apurinic/apyrimidinic (AP) endonuclease involved in active DNA demethylation and gene imprinting. According to a report, also displays an in vitro 3'-phosphatase activity. According to another report, has no in vitro 3'-phosphatase activity. Catalyzes the conversion of the 3'-blocking groups 3'-phosphor-alpha,beta-unsaturated aldehyde (3'-PUA) generated by ROS1 to 3'-OH. Has a strong non-specific affinity to DNA. Redundant with APE2 and at least one functional allele is required for seed viability. The polypeptide is DNA-(apurinic or apyrimidinic site) endonuclease (Arabidopsis thaliana (Mouse-ear cress)).